A 260-amino-acid chain; its full sequence is Isoprenyl transferase (260 aa).

The active site involves D40. Mg(2+) is bound at residue D40. Residues 41-44, W45, R53, H57, and 85-87 each bind substrate; these read GNGR and STE. N88 (proton acceptor) is an active-site residue. Residues W89, R91, R208, and 214–216 each bind substrate; that span reads RLS. E227 lines the Mg(2+) pocket.

This sequence belongs to the UPP synthase family. As to quaternary structure, homodimer. Requires Mg(2+) as cofactor.

In terms of biological role, catalyzes the condensation of isopentenyl diphosphate (IPP) with allylic pyrophosphates generating different type of terpenoids. This chain is Isoprenyl transferase, found in Bacillus subtilis (strain 168).